Reading from the N-terminus, the 359-residue chain is 3-dehydroquinate synthase (359 aa).

NAD(+)-binding positions include 106-110, 130-131, lysine 143, lysine 152, and 170-173; these read GVVGD, TT, and TLQT. Zn(2+) is bound by residues glutamate 185, histidine 248, and histidine 265.

Belongs to the sugar phosphate cyclases superfamily. Dehydroquinate synthase family. Co(2+) serves as cofactor. Requires Zn(2+) as cofactor. The cofactor is NAD(+).

It localises to the cytoplasm. It carries out the reaction 7-phospho-2-dehydro-3-deoxy-D-arabino-heptonate = 3-dehydroquinate + phosphate. It participates in metabolic intermediate biosynthesis; chorismate biosynthesis; chorismate from D-erythrose 4-phosphate and phosphoenolpyruvate: step 2/7. In terms of biological role, catalyzes the conversion of 3-deoxy-D-arabino-heptulosonate 7-phosphate (DAHP) to dehydroquinate (DHQ). In Desulforamulus reducens (strain ATCC BAA-1160 / DSM 100696 / MI-1) (Desulfotomaculum reducens), this protein is 3-dehydroquinate synthase.